The primary structure comprises 341 residues: Dihydroorotate dehydrogenase (quinone) (341 aa).

Residues Ala61 to Lys65 and Thr85 contribute to the FMN site. Lys65 is a substrate binding site. Asn110–Phe114 lines the substrate pocket. Positions 138 and 171 each coordinate FMN. Asn171 lines the substrate pocket. The Nucleophile role is filled by Ser174. Asn176 lines the substrate pocket. Lys216 and Thr244 together coordinate FMN. Asn245–Thr246 provides a ligand contact to substrate. Residues Gly267, Gly296, and Tyr317–Ser318 contribute to the FMN site.

The protein belongs to the dihydroorotate dehydrogenase family. Type 2 subfamily. As to quaternary structure, monomer. Requires FMN as cofactor.

The protein resides in the cell membrane. It catalyses the reaction (S)-dihydroorotate + a quinone = orotate + a quinol. It functions in the pathway pyrimidine metabolism; UMP biosynthesis via de novo pathway; orotate from (S)-dihydroorotate (quinone route): step 1/1. Catalyzes the conversion of dihydroorotate to orotate with quinone as electron acceptor. In Pseudomonas putida (strain W619), this protein is Dihydroorotate dehydrogenase (quinone).